A 485-amino-acid chain; its full sequence is MDFTNYKAHELKDLISKKEVSVEEVTKAHLENVKNIDAKVNAFLYIAEEEALNDAKALDEKLSKGEDIGLLGGAPLGIKDNISVKNMQNTCASKILEGYISPYDATVSESVKSQGGVILGKLNMDEFAMGSSTENSAYKITRNPWDLDRVPGGSSGGSAAAVASKEVPLALGTDTGGSVRQPASFCGIVGLKPTYGRVSRSGVVAYGSTLDQVGTLGRDVKDCALLTQVISGVDHRDFTTANINVPNYENSLSENIKGKKIALPKEFFKDGLDPKVQKSIYDALEVFKANGAEITEVSLPLADYAISAYYLLACAEASSNLARFDGVRYGHRSESVEDAVDVYFKSRSEAFGKEVKKRIMLGTYALSAGYYDAYYKKALKVRNLIKGEFENIFKDFDAIISPTAPTPAYKIGEKTENALEMYLGDIYTVPVNIAGIPAISLPCGVADGLPVGLQIMGNYFKEDTLFNLAYSYEQSTKWHEMHPNL.

Residues Lys-79 and Ser-154 each act as charge relay system in the active site. The active-site Acyl-ester intermediate is Ser-178.

The protein belongs to the amidase family. GatA subfamily. Heterotrimer of A, B and C subunits.

It carries out the reaction L-glutamyl-tRNA(Gln) + L-glutamine + ATP + H2O = L-glutaminyl-tRNA(Gln) + L-glutamate + ADP + phosphate + H(+). In terms of biological role, allows the formation of correctly charged Gln-tRNA(Gln) through the transamidation of misacylated Glu-tRNA(Gln) in organisms which lack glutaminyl-tRNA synthetase. The reaction takes place in the presence of glutamine and ATP through an activated gamma-phospho-Glu-tRNA(Gln). The protein is Glutamyl-tRNA(Gln) amidotransferase subunit A of Clostridium botulinum (strain Alaska E43 / Type E3).